A 337-amino-acid polypeptide reads, in one-letter code: Protein-arginine kinase (337 aa).

Residues 12 to 240 enclose the Phosphagen kinase C-terminal domain; that stretch reads IVIASKVKIL…NKLILREKNQ (229 aa). Residues 15 to 19, 162 to 166, and 193 to 198 contribute to the ATP site; these read ASKVK, RTKVF, and KSIYNS.

It belongs to the ATP:guanido phosphotransferase family.

It catalyses the reaction L-arginyl-[protein] + ATP = N(omega)-phospho-L-arginyl-[protein] + ADP + H(+). Its function is as follows. Catalyzes the specific phosphorylation of arginine residues in proteins. This chain is Protein-arginine kinase, found in Clostridium perfringens (strain 13 / Type A).